Reading from the N-terminus, the 535-residue chain is Reticuline oxidase (535 aa).

The N-terminal stretch at 1–23 is a signal peptide; that stretch reads MMCRSLTLRFFLFIVLLQTCVRG. Residue Asn42 is glycosylated (N-linked (GlcNAc...) asparagine). One can recognise an FAD-binding PCMH-type domain in the interval 71-245; that stretch reads TVSKPSFIVM…YAWKIKLLPV (175 aa). Positions 108–170 form a cross-link, 6-(S-cysteinyl)-8alpha-(pros-histidyl)-FAD (His-Cys); that stretch reads HSYEGLSYTA…DTLGFTAGWC (63 aa). Asn475 carries N-linked (GlcNAc...) asparagine glycosylation.

It belongs to the oxygen-dependent FAD-linked oxidoreductase family. FAD is required as a cofactor. The cofactor is a metal cation. The FAD cofactor is bound via a bicovalent 6-S-cysteinyl, 8alpha-N1-histidyl FAD linkage. As to expression, expressed in roots and stems. Not detected in leaves or reproductive organs. Restricted to the parietal region of sieve elements adjacent or proximal to laticifers.

It localises to the cytoplasmic vesicle. The catalysed reaction is (S)-reticuline + O2 = (S)-scoulerine + H2O2 + H(+). Its pathway is alkaloid biosynthesis; (S)-scoulerine biosynthesis; (S)-scoulerine from (S)-reticuline: step 1/1. Functionally, oxygen-dependent FAD-dependent oxidoreductase essential to the formation of benzophenanthridine alkaloids in the response of plants to pathogenic attack. Catalyzes the stereospecific conversion of the N-methyl moiety of (S)-reticuline into the berberine bridge carbon of (S)-scoulerine. Involved in the biosynthesis of sanguinarine. This Papaver somniferum (Opium poppy) protein is Reticuline oxidase (BBE1).